Consider the following 187-residue polypeptide: Elongation factor P (187 aa).

This sequence belongs to the elongation factor P family.

It is found in the cytoplasm. It functions in the pathway protein biosynthesis; polypeptide chain elongation. Involved in peptide bond synthesis. Stimulates efficient translation and peptide-bond synthesis on native or reconstituted 70S ribosomes in vitro. Probably functions indirectly by altering the affinity of the ribosome for aminoacyl-tRNA, thus increasing their reactivity as acceptors for peptidyl transferase. This chain is Elongation factor P, found in Mycoplasmopsis pulmonis (strain UAB CTIP) (Mycoplasma pulmonis).